A 156-amino-acid chain; its full sequence is Small ribosomal subunit protein uS7 (156 aa).

This sequence belongs to the universal ribosomal protein uS7 family. In terms of assembly, part of the 30S ribosomal subunit. Contacts proteins S9 and S11.

In terms of biological role, one of the primary rRNA binding proteins, it binds directly to 16S rRNA where it nucleates assembly of the head domain of the 30S subunit. Is located at the subunit interface close to the decoding center, probably blocks exit of the E-site tRNA. The polypeptide is Small ribosomal subunit protein uS7 (Rhodospirillum centenum (strain ATCC 51521 / SW)).